A 452-amino-acid polypeptide reads, in one-letter code: Phosphatidylinositol N-acetylglucosaminyltransferase GPI3 subunit (452 aa).

Residues 407–427 (LYLLCGIVEYMLFFLLEWLYP) form a helical membrane-spanning segment.

This sequence belongs to the glycosyltransferase group 1 family. In terms of assembly, component of the phosphatidylinositol N-acetylglucosaminyltransferase complex composed of at least GPI1, GPI2, GPI3, GPI15, GPI19 and ERI1.

It is found in the endoplasmic reticulum membrane. The catalysed reaction is a 1,2-diacyl-sn-glycero-3-phospho-(1D-myo-inositol) + UDP-N-acetyl-alpha-D-glucosamine = a 6-(N-acetyl-alpha-D-glucosaminyl)-1-(1,2-diacyl-sn-glycero-3-phospho)-1D-myo-inositol + UDP + H(+). It functions in the pathway glycolipid biosynthesis; glycosylphosphatidylinositol-anchor biosynthesis. With respect to regulation, inhibited by Ras, probably via the interaction between RAS2 and ERI1. In terms of biological role, catalytic subunit in the complex catalyzing the transfer of N-acetylglucosamine from UDP-N-acetylglucosamine to phosphatidylinositol, the first step of GPI biosynthesis. This is Phosphatidylinositol N-acetylglucosaminyltransferase GPI3 subunit (SPT14) from Saccharomyces cerevisiae (strain YJM789) (Baker's yeast).